Consider the following 153-residue polypeptide: Peptide deformylase (153 aa).

Residues Cys87 and His129 each coordinate Fe cation. The active site involves Glu130. Residue His133 coordinates Fe cation.

It belongs to the polypeptide deformylase family. Requires Fe(2+) as cofactor.

The enzyme catalyses N-terminal N-formyl-L-methionyl-[peptide] + H2O = N-terminal L-methionyl-[peptide] + formate. In terms of biological role, removes the formyl group from the N-terminal Met of newly synthesized proteins. Requires at least a dipeptide for an efficient rate of reaction. N-terminal L-methionine is a prerequisite for activity but the enzyme has broad specificity at other positions. The chain is Peptide deformylase from Dictyoglomus thermophilum (strain ATCC 35947 / DSM 3960 / H-6-12).